Reading from the N-terminus, the 480-residue chain is V-type ATP synthase beta chain 2 (480 aa).

The protein belongs to the ATPase alpha/beta chains family.

Produces ATP from ADP in the presence of a proton gradient across the membrane. The V-type beta chain is a regulatory subunit. The polypeptide is V-type ATP synthase beta chain 2 (atpB2) (Treponema pallidum (strain Nichols)).